Reading from the N-terminus, the 1057-residue chain is MGSLGSSQLKPFNKAPIDFVSTKRQPGAVCSLPELVDYNAQHNASHNFCIQGKPGGEFDTFTHADFKVAAANCAKWLKANLPLGASQAPNAITKNAPVALFMESDFGLVVHEFALLSLGIPPLVLSVRLPPNAIMHLLKSTGATSFIVSQKLSGPAKPALAALAANGIATAVGNPYTSFLEPGVDVASKGTFEVPENPDDITLLLHSSGTTGLPKPIPISHRMLMFAVSTAKFDTEDEAQGLNVSSLPLFHGFGLVAPGISMTVGKTTVYPASDGIPNIVSIIDLIKRTNARSLMTVPFLLDDVINNEEGLRVLAGLDFVGTGGAALGPGVGDKLAAAGIKLLNFYGTTESGPLSLVFVPKDNYNWKFFRLRTDMNFEIANLEPKDGVKRYRLTIRAFGEGEDQEIADQLIRNDEYPETDFAAVGRDDDVIVLATGEKASPQILENMLTEAPMVKAAIAFGENQFNLGVIVEPKEPLAEGGEAAFKELIWPIIVAAGQKMDAHSVIPSQEAVIVVPNGVRVPRTDKGSIARKEVYALFADAMKDVYEKLARAVGGADLKPLDLETLEEDIKALIIEHSGLKVPAEGLSAEESLFDFGLDSLQALKLRRVLAAAANKSEAMKDVNVDKVIPPEFVYLNPSVAQMAAAIKNPSAGSAAPTVDANAYKGVEKFAEQYALPGASAEEKAPSVRERAIVVVTGSSGSLGSHVVATLARDPKVMRVVVMVRQGSKPFDREPWTSRGINLKEDEFAKIVPLPVDPTAENLGVDPMMYGMLQNNLTHIVHAAWPMNYLTTLPSFQYQFEYLSGLLKLATSGNTANKRRFIFVSSIAAVARLSLSNSGAMISETPVEPVDAACGIGYADGKLVCEKILEKAAVSHAGQLEIAYVRCGQMTGSRATGAWNADEQIPMIFRTAKNLGVLPRIPGTLSWIPVDDAAQYIMDLSFFEGALPIASHLENPVRQSWADLMDGAGKFLGIQKSVSWPEWLELAGAAEDGPQDKYPVKKLFAFFKFSFGPMASGAVILGTDVARAHSATIKNMGALDASTIMKYFLHWQKINYL.

The adenylation (A) domain stretch occupies residues 21–378; it reads STKRQPGAVC…FRLRTDMNFE (358 aa). AMP contacts are provided by residues H251, 344 to 345, T349, and 423 to 426; these read NF and AVGR. The region spanning 564–651 is the Carrier domain; the sequence is ETLEEDIKAL…QMAAAIKNPS (88 aa). S600 is subject to O-(pantetheine 4'-phosphoryl)serine. Residues 693-1025 form a reductase (R) domain region; the sequence is IVVVTGSSGS…SGAVILGTDV (333 aa). NADP(+) contacts are provided by residues 700 to 703, 783 to 785, Y858, and K862; these read SGSL and AAW.

Belongs to the adenylate-forming reductase family.

It catalyses the reaction ilicicolinate B + AH2 + ATP = ilicicolin B + A + AMP + diphosphate. It functions in the pathway secondary metabolite biosynthesis; terpenoid biosynthesis. Its function is as follows. Nonribosomal peptide synthase-like protein; part of the cluster that mediates the biosynthesis of LL-Z1272-beta, also known as ilicicolin B, a prenylated aryl-aldehyde produced by several fungi and that serves as a key pathway intermediate for many fungal meroterpenoids. The first step in the pathway is performed by the non-reducing polyketide synthase stbA that produces orsellinic acid by condensing acetyl-CoA with 3 malonyl-CoA units. The prenyltransferase stbC then prenylates orsenilic acid into grifolic acid. Finally, grifolic acid is reduced to ilicicolin B by the NRPS-like protein stbB. In Stachybotrys bisbyi (Hyalostachybotrys bisbyi), this protein is Adenylate-forming reductase stbB.